Here is a 204-residue protein sequence, read N- to C-terminus: Bombinin-like peptides 1 (204 aa).

The segment at residues 1 to 16 (MNFKYIVAVSILIASA) is a signal peptide (or 18). An asparagine amide mark is found at Asn70 and Asn133.

Belongs to the bombinin family. As to expression, expressed by the skin glands.

The protein resides in the secreted. Has antimicrobial activity, but no hemolytic activity. Preference on killing Gram-negative non-enteric bacteria. This is Bombinin-like peptides 1 from Bombina orientalis (Oriental fire-bellied toad).